We begin with the raw amino-acid sequence, 206 residues long: Holliday junction branch migration complex subunit RuvA (206 aa).

The interval 1–64 (MIGKLKGTVD…EDQIRLFGFV (64 aa)) is domain I. The interval 65-143 (TEAEREWFRL…AFTAADPGLA (79 aa)) is domain II. The tract at residues 144-154 (RLAADVEATEA) is flexible linker. A domain III region spans residues 154–206 (AAGGALADAVSALVNLGYGQAQAHTAIAAAGRKAGEDATTETLIRLGLKELAK).

The protein belongs to the RuvA family. As to quaternary structure, homotetramer. Forms an RuvA(8)-RuvB(12)-Holliday junction (HJ) complex. HJ DNA is sandwiched between 2 RuvA tetramers; dsDNA enters through RuvA and exits via RuvB. An RuvB hexamer assembles on each DNA strand where it exits the tetramer. Each RuvB hexamer is contacted by two RuvA subunits (via domain III) on 2 adjacent RuvB subunits; this complex drives branch migration. In the full resolvosome a probable DNA-RuvA(4)-RuvB(12)-RuvC(2) complex forms which resolves the HJ.

It localises to the cytoplasm. Its function is as follows. The RuvA-RuvB-RuvC complex processes Holliday junction (HJ) DNA during genetic recombination and DNA repair, while the RuvA-RuvB complex plays an important role in the rescue of blocked DNA replication forks via replication fork reversal (RFR). RuvA specifically binds to HJ cruciform DNA, conferring on it an open structure. The RuvB hexamer acts as an ATP-dependent pump, pulling dsDNA into and through the RuvAB complex. HJ branch migration allows RuvC to scan DNA until it finds its consensus sequence, where it cleaves and resolves the cruciform DNA. The sequence is that of Holliday junction branch migration complex subunit RuvA from Azorhizobium caulinodans (strain ATCC 43989 / DSM 5975 / JCM 20966 / LMG 6465 / NBRC 14845 / NCIMB 13405 / ORS 571).